The chain runs to 170 residues: MSTLLIALIALIVLLIIILVVFLYYKKQQPPKKVCKVDKDCGSREHCVRGTCSSLSCLDAVKMDKRDVKMDSKISSCKFTPNFYHFTDTAAEQEFGKTWHSIKITPSPGESHTSQEICERYCLWGTDDCTGWEYFGDEKNGTCNIYNNPYLALKYTKDHVLYLPRNHKYA.

Over 1-3 the chain is Intravirion; it reads MST. The chain crosses the membrane as a helical span at residues 4–24; it reads LLIALIALIVLLIIILVVFLY. Residues 25 to 170 are Virion surface-facing; the sequence is YKKQQPPKKV…LYLPRNHKYA (146 aa).

Belongs to the asfivirus inner membrane protein p22 family.

Its subcellular location is the virion membrane. It localises to the host cell membrane. The sequence is that of Inner membrane protein p22 from Ornithodoros (relapsing fever ticks).